The following is a 102-amino-acid chain: Large ribosomal subunit protein bL21 (102 aa).

It belongs to the bacterial ribosomal protein bL21 family. In terms of assembly, part of the 50S ribosomal subunit. Contacts protein L20.

In terms of biological role, this protein binds to 23S rRNA in the presence of protein L20. This Phytoplasma mali (strain AT) protein is Large ribosomal subunit protein bL21.